The sequence spans 463 residues: L-seryl-tRNA(Sec) selenium transferase (463 aa).

At K295 the chain carries N6-(pyridoxal phosphate)lysine.

Belongs to the SelA family. As to quaternary structure, homodecamer; pentamer of dimers. Binds only one seryl-tRNA(Sec) per dimer. Requires pyridoxal 5'-phosphate as cofactor.

It localises to the cytoplasm. It catalyses the reaction L-seryl-tRNA(Sec) + selenophosphate + H(+) = L-selenocysteinyl-tRNA(Sec) + phosphate. It functions in the pathway aminoacyl-tRNA biosynthesis; selenocysteinyl-tRNA(Sec) biosynthesis; selenocysteinyl-tRNA(Sec) from L-seryl-tRNA(Sec) (bacterial route): step 1/1. Its function is as follows. Converts seryl-tRNA(Sec) to selenocysteinyl-tRNA(Sec) required for selenoprotein biosynthesis. This is L-seryl-tRNA(Sec) selenium transferase from Photorhabdus laumondii subsp. laumondii (strain DSM 15139 / CIP 105565 / TT01) (Photorhabdus luminescens subsp. laumondii).